Reading from the N-terminus, the 891-residue chain is Receptor-like protein 50 (891 aa).

Positions 1–22 (MITIIWSLCLIFCLSNSILVIA) are cleaved as a signal peptide. Topologically, residues 23–849 (KDLCLPDQRD…KEEKDKGLSW (827 aa)) are extracellular. N62 and N98 each carry an N-linked (GlcNAc...) asparagine glycan. LRR repeat units follow at residues 105–130 (QHLQSLDLSYNDLSCTLPDSSGNFKY), 132–152 (RVLNLLGCNLFGEIPTSLRSL), 153–176 (SYLTDLDLSYNDDLTGEILDSMGN), 177–201 (LKHLRVLSLTSCKFTGKIPSSLGNL), 203–225 (YLTDLDLSWNYFTGELPDSMGNL), 226–249 (KSLRVLNLHRCNFFGKIPTSLGSL), and 250–272 (SNLTDLDISKNEFTSEGPDSMSS). N200 is a glycosylation site (N-linked (GlcNAc...) asparagine). 3 N-linked (GlcNAc...) asparagine glycosylation sites follow: N251, N285, and N306. 4 LRR repeats span residues 286-309 (LSSLTNVDLSSNQFKAMLPSNMSS), 310-334 (LSKLEAFDISGNSFSGTIPSSLFML), 336-358 (SLIKLDLGTNDFSGPLKIGNISS), and 359-383 (PSNLQELYIGENNINGPIPRSILKL). An N-linked (GlcNAc...) asparagine glycan is attached at N355. The LRR 12; degenerate repeat unit spans residues 384-407 (VGLSALSLSFWDTGGIVDFSIFLQ). LRR repeat units follow at residues 408 to 436 (LKSLRSLDLSGINLNISSSHHLPSHMMHL), 438 to 453 (LSSCNISQFPKFLENQ), 454 to 477 (TSLYHLDISANQIEGQVPEWLWRL), 478 to 504 (PTLRYVNIAQNAFSGELTMLPNPIYSF), 506 to 519 (ASDNKFSGEIPRAV), 520 to 544 (CEIGTLVLSNNNFSGSIPPCFEISN), 545 to 568 (KTLSILHLRNNSLSGVIPEESLHG), 570 to 591 (LRSLDVGSNRLSGQFPKSLINC), 593 to 614 (YLQFLNVEENRINDTFPSWLKS), 615 to 641 (LPNLQLLVLRSNEFHGPIFSPGDSLSF), 642 to 665 (SKLRFFDISENRFSGVLPSDYFVG), 712 to 736 (FEIYKTIDVSGNRLEGDIPESIGIL), 737 to 760 (KELIVLNMSNNAFTGHIPPSLSNL), 761 to 784 (SNLQSLDLSQNRLSGSIPGELGEL), and 786 to 809 (FLARMNFSYNMLEGPIPQGTQIQS). N-linked (GlcNAc...) asparagine glycans are attached at residues N422, N442, and N452. N531, N544, N554, N590, and N605 each carry an N-linked (GlcNAc...) asparagine glycan. Residues N743 and N759 are each glycosylated (N-linked (GlcNAc...) asparagine). 2 N-linked (GlcNAc...) asparagine glycosylation sites follow: N791 and N811. A helical transmembrane segment spans residues 850–870 (VAAAIGYVPGLFCGLAIGHIL). Over 871 to 891 (TSYKRDWFMRIFSCFSSPLKK) the chain is Cytoplasmic.

This sequence belongs to the RLP family.

It is found in the cell membrane. The protein is Receptor-like protein 50 of Arabidopsis thaliana (Mouse-ear cress).